Here is a 230-residue protein sequence, read N- to C-terminus: Urease accessory protein UreF (230 aa).

This sequence belongs to the UreF family. In terms of assembly, ureD, UreF and UreG form a complex that acts as a GTP-hydrolysis-dependent molecular chaperone, activating the urease apoprotein by helping to assemble the nickel containing metallocenter of UreC. The UreE protein probably delivers the nickel.

The protein localises to the cytoplasm. Functionally, required for maturation of urease via the functional incorporation of the urease nickel metallocenter. The polypeptide is Urease accessory protein UreF (Cupriavidus necator (strain ATCC 17699 / DSM 428 / KCTC 22496 / NCIMB 10442 / H16 / Stanier 337) (Ralstonia eutropha)).